A 91-amino-acid chain; its full sequence is VASENRYEGTVGVSGNLPFLGTADVAGEFPTAGIGEILYGCGNGAVGITREGGLGYGAGYGGGYGLGYGGYGGGYGLGYGGYGGCGCGCGY.

The tract at residues valine 1–glutamate 51 is central domain. The right arm (Gly-rich tandem repeats) stretch occupies residues glycine 52–tyrosine 91.

The protein belongs to the chorion protein family.

This protein is one of many from the eggshell of the silk moth. This chain is Chorion class B protein M3A5, found in Bombyx mori (Silk moth).